An 857-amino-acid polypeptide reads, in one-letter code: Facilitated trehalose transporter Tret1-1 (857 aa).

2 disordered regions span residues 1 to 27 and 92 to 203; these read MSGR…GKLK and SFRP…KATS. Residues 1–392 are Cytoplasmic-facing; that stretch reads MSGRDNRGAG…VYRPTTNPIY (392 aa). The segment covering 134–143 has biased composition (basic and acidic residues); it reads EIREHRDRQQ. Residues 171-181 are compositionally biased toward polar residues; it reads GNSNTNSNKAA. Phosphoserine is present on residues Ser-248, Ser-249, Ser-250, Ser-320, and Ser-322. A disordered region spans residues 327–346; the sequence is LTSRQHFQQQRSISTDSRKS. The span at 330–341 shows a compositional bias: polar residues; sequence RQHFQQQRSIST. Residues 393 to 413 traverse the membrane as a helical segment; it reads IWTQVLAALSVSLGSLVVGFV. Over 414–440 the chain is Extracellular; sequence SAYTSPALVSMTDRNITSFEVTQDAGS. A glycan (N-linked (GlcNAc...) asparagine) is linked at Asn-428. The helical transmembrane segment at 441-461 threads the bilayer; it reads WVGGIMPLAALAGGITGGPLI. At 462 to 473 the chain is on the cytoplasmic side; that stretch reads EYLGRRNTILAT. Residues 474-494 traverse the membrane as a helical segment; it reads AVPFIVSSLLIACAVNVAMVL. The Extracellular portion of the chain corresponds to 495–497; it reads CGR. A helical membrane pass occupies residues 498-518; that stretch reads FLAGFCVGIASLSLPVYLGET. Over 519–528 the chain is Cytoplasmic; sequence VQPEVRGTLG. The helical transmembrane segment at 529–549 threads the bilayer; that stretch reads LLPTAFGNIGILLCFVAGSFM. N-linked (GlcNAc...) asparagine glycosylation occurs at Asn-550. The Extracellular segment spans residues 550 to 552; it reads NWS. Residues 553–573 traverse the membrane as a helical segment; sequence MLAFLGAALPVPFLILMFLIP. Residues 574 to 636 are Cytoplasmic-facing; that stretch reads ETPRWFVGRG…ELLKLNNLKP (63 aa). The chain crosses the membrane as a helical span at residues 637-657; it reads LSISLGLMFFQQFSGINAVIF. Residues 658–673 are Extracellular-facing; that stretch reads YTVQIFKDAGSTIDGN. The helical transmembrane segment at 674 to 694 threads the bilayer; sequence LCTIIVGIVNFLATFIGIVLI. At 695 to 700 the chain is on the cytoplasmic side; sequence DRAGRK. The helical transmembrane segment at 701–721 threads the bilayer; it reads ILLYVSDIAMVLTLFVLGGFF. Over 722–740 the chain is Extracellular; it reads YCKANGPDVSHLGWLPLTC. Residues 741 to 761 traverse the membrane as a helical segment; it reads FVIYILGFSLGFGPIPWLMMG. At 762-767 the chain is on the cytoplasmic side; it reads EILPAK. Residues 768-788 traverse the membrane as a helical segment; it reads IRGSAASVATAFNWFCTFVVT. Residues 789–801 lie on the Extracellular side of the membrane; sequence KTFQDLTVAMGAH. The helical transmembrane segment at 802 to 822 threads the bilayer; it reads GAFWLFGAICFVGLFFVIIYV. Residues 823 to 857 lie on the Cytoplasmic side of the membrane; sequence PETQGKTLEDIERKMMGRVRRMSSVANIKPLSFNM. Phosphoserine occurs at positions 845 and 846.

The protein belongs to the major facilitator superfamily. Sugar transporter (TC 2.A.1.1) family. Trehalose transporter subfamily.

The protein localises to the cell membrane. In terms of biological role, low-capacity facilitative transporter for trehalose. Does not transport maltose, sucrose or lactose. Mediates the bidirectional transfer of trehalose. Responsible for the transport of trehalose synthesized in the fat body and the incorporation of trehalose into other tissues that require a carbon source, thereby regulating trehalose levels in the hemolymph. This is Facilitated trehalose transporter Tret1-1 from Drosophila sechellia (Fruit fly).